The sequence spans 1535 residues: MMLLPIFLLLCIGINLIRAESCPPSQAILPCRCSLRGKEIQIWCSHSNLPQIMDGLKAVERNIKGRIDELVLENNQLPALPGRFFGSLQIVRLMLRHNSIERVSNGWLNELENGLVEIFVVEPQLRSIPAESLNGMINMLAITIQSEELKHLPDFSGLLSLTYLSVQTGALQELPSHLFRHLPKLQHIHITGGSGLTRLEAGLFDGLISLKNLDLSHNGLNWIHLRALSRLPNLVSLKLSHNQISDVGMVGRIVKDLEHLKKLRLDNNLITVIEDGSFVDLPNLSELHLNDNRITELQYGAFLRTPQLKTIYLQNNLIRRIHPESLLQASGSGVEAVHMYNNEIGHVEALRALLDALPRLRYLDMSGNLLSELPYGALRGHGTLEQLHLNHNHLRLIERDALMAMPALRELRMRNNSLSSDLPLPFWNLPGLKGLDLAQNQFARVDSQLLAGLPSLRRLDLSENGLIELAPNSFRHNPLLETLNISSNELTKIHSSTLIHLERLFEVDASYNQLKSVIAGLPRIVERISLKGNQITSLPAAASKDLQLPNLRMLDLSQNRIEQLPRHGFQGAMELRVLSLAQNELRQLKDTSFIGIQRLELLHLQENQLGEADERALLPLAELRNLNLQSNKLEAITDNFFSNNSRLEQLDLSRNLIRSISPTAFDTQRSLEYLDLSGNALLDISVGLGNLNNLRDIDLSYNQISRIQSDVIGGWRNVVEIRLSNNLIVELQQGTFRNLPKLQYLDLSSNEIRNVEPGALKGLDELQEFVLADNKLVELKDHVFEELPSLLASHFQYNKLRYISPESFHNANSLVFLNLSNNHFRNMENIGLRSMRNLEVLDLSTNGVKLVSTMPLKALNWLVELKMDNNQICRIQGSPFETMPRLRVLSMRNNQLRSIKERTFRNVRGNIAILDVDGNPIDCNCEMQWLSVWLQETNFPYPGPKCQDGRLLRSARMERSLCVGADIYGNERTDGNQLPLLNEHGDVFQRDLPDDFNDECEAGEGTRLPGDRPLVGESEYFYDQYVDATEAPDTTHSAISTSQRPKPTPTINSNIDLNNTILHTKYFNRKPQPGSGSPFTFFGYPLPSVSLGRFFGFGDRGRKQRTDSNDDMPATHRMAHISLPSGRGKTRMYQPNSAEFEKYLKDQQKQEKLNIARNRYVDTDSTTSSMEDALSNESGSAATTVGVFRTTFREPSSIERGGFRPIVPAHVGGFMPVHDPQQRRGLVEVVNITGNPSEIVQGIGQRKFIPISTQARPKPTKSSGESSETATYEVTETTPDITTTTPLMQRIATSTTKASTTTTRSTTTTSTTQVTPAENNASSSTELDSQYDDEDLEAQSVTLLRPPPLVQTTTAETILLIPPAEEHVAQIKSRSWVTTTTPQSPSDNQVTLAGPTSTVPPPPPASPPLRGGGRSTITKVYTPYQQQVAQPTAEEYQRTTPSGDNEGVASEHQLTANAQKRTELELLQVDRVDRKDGMDWYYESFKKKRDFNGGAAVRKTAHKEVFYDGVAASSSWNRLHKEILFISLLLLWRAC.

An N-terminal signal peptide occupies residues 1–19 (MMLLPIFLLLCIGINLIRA). LRR repeat units lie at residues 64–87 (KGRI…FFGS), 89–110 (QIVR…WLNE), 112–135 (ENGL…SLNG), 136–157 (MINM…DFSG), 158–181 (LLSL…LFRH), 183–206 (PKLQ…LFDG), 207–230 (LISL…ALSR), 231–256 (LPNL…IVKD), 257–280 (LEHL…SFVD), 281–304 (LPNL…AFLR), 306–328 (PQLK…SLLQ), 331–356 (GSGV…LLDA), 357–380 (LPRL…ALRG), 382–404 (GTLE…ALMA), 406–429 (PALR…FWNL), 430–452 (PGLK…LLAG), 453–476 (LPSL…SFRH), 478–500 (PLLE…TLIH), 521–545 (LPRI…ASKD), 548–571 (LPNL…GFQG), 573–595 (MELR…SFIG), 597–619 (QRLE…ALLP), 620–643 (LAEL…FFSN), 645–667 (SRLE…AFDT), 669–691 (RSLE…LGNL), 692–714 (NNLR…VIGG), 716–738 (RNVV…TFRN), 739–762 (LPKL…ALKG), 764–786 (DELQ…VFEE), 788–810 (PSLL…SFHN), 811–834 (ANSL…GLRS), 835–858 (MRNL…PLKA), 860–882 (NWLV…PFET), and 883–906 (MPRL…TFRN). Residues 919-963 (NPIDCNCEMQWLSVWLQETNFPYPGPKCQDGRLLRSARMERSLCV) form the LRRCT domain. 4 disordered regions span residues 1036-1055 (HSAI…NSNI), 1253-1331 (TQAR…DSQY), 1377-1416 (VTTT…GRST), and 1429-1449 (AQPT…EGVA). Residues 1253 to 1270 (TQARPKPTKSSGESSETA) are compositionally biased toward polar residues. Composition is skewed to low complexity over residues 1271 to 1285 (TYEV…TTTT) and 1293 to 1315 (TSTT…TQVT). 2 stretches are compositionally biased toward polar residues: residues 1316–1328 (PAEN…TELD) and 1377–1391 (VTTT…NQVT). The segment covering 1398–1407 (TVPPPPPASP) has biased composition (pro residues).

It is found in the secreted. It localises to the extracellular space. Its subcellular location is the extracellular matrix. The protein localises to the cytoplasm. Required for normal morphology and function of ciliated sensory organs. This chain is Protein artichoke, found in Drosophila melanogaster (Fruit fly).